Here is a 398-residue protein sequence, read N- to C-terminus: tRNA(Ile)-lysidine synthase (398 aa).

25 to 30 (SGGVDS) is an ATP binding site.

This sequence belongs to the tRNA(Ile)-lysidine synthase family.

It is found in the cytoplasm. The enzyme catalyses cytidine(34) in tRNA(Ile2) + L-lysine + ATP = lysidine(34) in tRNA(Ile2) + AMP + diphosphate + H(+). Functionally, ligates lysine onto the cytidine present at position 34 of the AUA codon-specific tRNA(Ile) that contains the anticodon CAU, in an ATP-dependent manner. Cytidine is converted to lysidine, thus changing the amino acid specificity of the tRNA from methionine to isoleucine. This chain is tRNA(Ile)-lysidine synthase, found in Francisella tularensis subsp. tularensis (strain SCHU S4 / Schu 4).